The primary structure comprises 940 residues: SWI/SNF-related matrix-associated actin-dependent regulator of chromatin subfamily A-like protein 1 (940 aa).

The interval 1-155 (MSISPLKCPC…GQGHPQASLE (155 aa)) is disordered. Serine 2 is subject to N-acetylserine. Mediates interaction with RPA2 stretches follow at residues 2–36 (SISPLKCPCLLQRSRGKIEANRQKALARRAEKLLA) and 11–36 (LLQRSRGKIEANRQKALARRAEKLLA). Residues 17 to 40 (GKIEANRQKALARRAEKLLAEQHQ) show a composition bias toward basic and acidic residues. The stretch at 18 to 40 (KIEANRQKALARRAEKLLAEQHQ) forms a coiled coil. Polar residues-rich tracts occupy residues 41–53 (KPAQSKQGPSQNL) and 68–95 (KQQNPSSSSHGDQRPQNPHSFSPNTSEQ). A phosphoserine mark is found at serine 125, serine 131, serine 153, and serine 200. 2 HARP domains span residues 229–299 (VVGS…QPLE) and 325–396 (SLAF…DPLP). Positions 442 to 597 (NFAIAQRGRL…YTQILAVRPT (156 aa)) constitute a Helicase ATP-binding domain. 455–462 (DDMGLGKT) contacts ATP. The DESH box signature appears at 546–549 (DESH). The Nuclear localization signal signature appears at 641–658 (RRLKGDVLSQLPAKQARW). The segment at 662 to 682 (PQARSTPGPEPPWMPPPRMTT) is disordered. The segment covering 669–679 (GPEPPWMPPPR) has biased composition (pro residues). In terms of domain architecture, Helicase C-terminal spans 708–864 (SIIEYILDLL…ETNFSEMTEA (157 aa)). The tract at residues 899–918 (ESFDPGSQDTGDKLDESTLT) is disordered.

This sequence belongs to the SNF2/RAD54 helicase family. SMARCAL1 subfamily. In terms of assembly, interacts with RPA2; the interaction is direct and mediates the recruitment by the RPA complex of SMARCAL1 to sites of DNA damage. Post-translationally, DNA damage-regulated phosphorylation by kinases that may include ATM, ATR and PRKDC. In terms of tissue distribution, expressed in mature oocytes, 2-4 cell stage embryos and 8-16 cell stage embryos. Expressed at lower levels in morulae and blastocysts.

The protein localises to the nucleus. The enzyme catalyses ATP + H2O = ADP + phosphate + H(+). In terms of biological role, ATP-dependent annealing helicase that binds selectively to fork DNA relative to ssDNA or dsDNA and catalyzes the rewinding of the stably unwound DNA. Rewinds single-stranded DNA bubbles that are stably bound by replication protein A (RPA). Acts throughout the genome to reanneal stably unwound DNA, performing the opposite reaction of many enzymes, such as helicases and polymerases, that unwind DNA. May play an important role in DNA damage response by acting at stalled replication forks. In Bos taurus (Bovine), this protein is SWI/SNF-related matrix-associated actin-dependent regulator of chromatin subfamily A-like protein 1 (SMARCAL1).